The following is a 220-amino-acid chain: Iron-sulfur cluster repair protein YtfE (220 aa).

This sequence belongs to the RIC family. YtfE subfamily. In terms of assembly, homodimer.

The protein resides in the cytoplasm. Its function is as follows. Di-iron-containing protein involved in the repair of iron-sulfur clusters damaged by oxidative and nitrosative stress conditions. In Salmonella schwarzengrund (strain CVM19633), this protein is Iron-sulfur cluster repair protein YtfE.